Reading from the N-terminus, the 3530-residue chain is Unconventional myosin-XV (3530 aa).

Disordered regions lie at residues M1–K46, A615–V710, and E730–L1057. Over residues P663–S681 the composition is skewed to pro residues. 3 stretches are compositionally biased toward low complexity: residues P682 to P693, A753 to R763, and S823 to P835. A compositionally biased stretch (pro residues) spans P836 to P850. Low complexity predominate over residues R859–P869. The span at P903 to P913 shows a compositional bias: basic and acidic residues. A compositionally biased stretch (pro residues) spans T1027–V1038. The region spanning D1222–E1899 is the Myosin motor domain. Residue G1315–T1322 participates in ATP binding. A coiled-coil region spans residues E1323–A1350. The interval F1792 to N1799 is actin-binding. The segment at E1888–R2029 is neck or regulatory domain. 3 IQ domains span residues L1902–S1924, L1925–K1954, and F1955–R1976. The tract at residues T2030–L3530 is tail. The MyTH4 1 domain maps to M2065 to Y2217. 4 disordered regions span residues A2311 to A2381, Y2414 to L2446, A2490 to A2509, and T2644 to P2665. Residues G2349–H2371 show a composition bias toward polar residues. Residues K2417–S2427 show a composition bias toward gly residues. The 87-residue stretch at K2867 to A2953 folds into the SH3 domain. The MyTH4 2 domain maps to F3050–L3204. The 322-residue stretch at S3209–L3530 folds into the FERM domain.

This sequence belongs to the TRAFAC class myosin-kinesin ATPase superfamily. Myosin family. Interacts with the third PDZ domain of WHRN which is necessary for localization of WHRN to stereocilium tips. Interacts with EPS8. Interacts with FASLG. As to expression, highly expressed in pituitary. Also expressed at lower levels in adult brain, kidney, liver, lung, pancreas, placenta and skeletal muscle. Not expressed in brain. In the pituitary, highly expressed in anterior gland cells.

The protein localises to the cell projection. It localises to the stereocilium. Its subcellular location is the cytoplasm. The protein resides in the cytoskeleton. In terms of biological role, myosins are actin-based motor molecules with ATPase activity. Unconventional myosins serve in intracellular movements. Their highly divergent tails are presumed to bind to membranous compartments, which would be moved relative to actin filaments. Required for the arrangement of stereocilia in mature hair bundles. The polypeptide is Unconventional myosin-XV (MYO15A) (Homo sapiens (Human)).